The sequence spans 392 residues: Bifunctional enzyme IspD/IspF (392 aa).

2-C-methyl-D-erythritol 4-phosphate cytidylyltransferase stretches follow at residues 1–234 and 1–235; these read MTES…MMRT and MTES…MRTA. Positions 235–392 are 2-C-methyl-D-erythritol 2,4-cyclodiphosphate synthase; it reads AVGMGYDVHR…AVATIQLPET (158 aa). The a divalent metal cation site is built by Asp-241 and His-243. Residues 241–243 and 267–268 contribute to the 4-CDP-2-C-methyl-D-erythritol 2-phosphate site; these read DVH and HS. Residue His-275 participates in a divalent metal cation binding. 4-CDP-2-C-methyl-D-erythritol 2-phosphate is bound by residues 289 to 291, 365 to 368, Phe-372, and Arg-375; these read DIG and TTTE.

In the N-terminal section; belongs to the IspD/TarI cytidylyltransferase family. IspD subfamily. The protein in the C-terminal section; belongs to the IspF family. It depends on a divalent metal cation as a cofactor.

The enzyme catalyses 2-C-methyl-D-erythritol 4-phosphate + CTP + H(+) = 4-CDP-2-C-methyl-D-erythritol + diphosphate. It catalyses the reaction 4-CDP-2-C-methyl-D-erythritol 2-phosphate = 2-C-methyl-D-erythritol 2,4-cyclic diphosphate + CMP. The protein operates within isoprenoid biosynthesis; isopentenyl diphosphate biosynthesis via DXP pathway; isopentenyl diphosphate from 1-deoxy-D-xylulose 5-phosphate: step 2/6. Its pathway is isoprenoid biosynthesis; isopentenyl diphosphate biosynthesis via DXP pathway; isopentenyl diphosphate from 1-deoxy-D-xylulose 5-phosphate: step 4/6. In terms of biological role, bifunctional enzyme that catalyzes the formation of 4-diphosphocytidyl-2-C-methyl-D-erythritol from CTP and 2-C-methyl-D-erythritol 4-phosphate (MEP) (IspD), and catalyzes the conversion of 4-diphosphocytidyl-2-C-methyl-D-erythritol 2-phosphate (CDP-ME2P) to 2-C-methyl-D-erythritol 2,4-cyclodiphosphate (ME-CPP) with a corresponding release of cytidine 5-monophosphate (CMP) (IspF). The chain is Bifunctional enzyme IspD/IspF from Sphingopyxis alaskensis (strain DSM 13593 / LMG 18877 / RB2256) (Sphingomonas alaskensis).